The primary structure comprises 914 residues: MDWGLFLHCAALTFTLSRALRSDKCGDTIKILSPGYLTSPGYPQSYHPSQKCEWLIQAPEPYQRIMINFNPHFDLEDRDCKYDYVEVIDGDNAEGRLWGKYCGKIAPPPLVSSGPYLFIKFVSDYETHGAGFSIRYEVFKRGPECSRNFTSSSGMIKSPGFPEKYPNSLECTYIIFAPKMSEIILEFESFELEPDSNTPGGAFCRYDRLEIWDGFPDVGPHIGRYCGQNNPGRVRSSTGILSMVFYTDSAIAKEGFSANYSVSQSSVSEDFQCMEPLGMESGEIHSDQITVSSQYSAIWSSERSRLNYPENGWTPGEDSVREWIQVDLGLLRFVSGIGTQGAISKETKKEYYLKTYRVDVSSNGEDWITLKEGNKPVVFQGNSNPTDVVYRPFPKPVLTRFVRIKPVSWENGVSLRFEVYGCKITDYPCSGMLGMVSGLIPDSQITASTQVDRNWIPENARLITSRSGWALPPTTHPYTNEWLQIDLGEEKIVRGIIVQGGKHRENKVFMKKFKIGYSNNGSDWKMIMDSSKKKIKTFEGNTNYDTPELRTFEPVSTRIIRVYPERATHAGLGLRMELLGCELEAPTAVPTVSEGKPVDECDDDQANCHSGTGGTTVLNTEKPTVIDNTVQPELPPYNLNCGFGWGSHKTLCQWEHDNQVDLKWAILTSKTGPIQDHTGDGNFIYSQADESQKGKVARLLSPIIYSQNSAHCMTFWYHMSGPHVGTLKIKLRYQKPDEYDQVLLSLNGHQANCWQEGRVLLHKSVKLYQVVIEGEIGKGNGGIAVDDINIDNHISQEDCQKSTDVESEIVEEDPESNQTGFTPSYRTDEDYDDISRKPGNVLKTLDPILITIIAMSALGVLLGAICGVVLYCACWHNGMSERNLSALENYNFELVDGVKLKKDKLNTQNSYSEA.

The N-terminal stretch at 1–18 is a signal peptide; it reads MDWGLFLHCAALTFTLSR. Residues 20–847 lie on the Extracellular side of the membrane; it reads LRSDKCGDTI…PGNVLKTLDP (828 aa). 3 disulfide bridges follow: cysteine 25–cysteine 52, cysteine 80–cysteine 102, and cysteine 145–cysteine 171. CUB domains follow at residues 25–139 and 145–263; these read CGDT…YEVF and CSRN…YSVS. Asparagine 148 carries an N-linked (GlcNAc...) asparagine glycan. Ca(2+) is bound by residues glutamate 193, aspartate 207, and aspartate 248. A disulfide bridge connects residues cysteine 204 and cysteine 226. Asparagine 259 is a glycosylation site (N-linked (GlcNAc...) asparagine). 2 cysteine pairs are disulfide-bonded: cysteine 273–cysteine 422 and cysteine 429–cysteine 581. F5/8 type C domains lie at 273-422 and 429-581; these read CMEP…VYGC and CSGM…LLGC. Asparagine 520 carries an N-linked (GlcNAc...) asparagine glycan. O-linked (Xyl...) (chondroitin sulfate) serine; alternate glycosylation is present at serine 610. An O-linked (Xyl...) (heparan sulfate) serine; alternate glycan is attached at serine 610. The MAM domain maps to 636–801; it reads PYNLNCGFGW…NHISQEDCQK (166 aa). The tract at residues 809-829 is disordered; the sequence is IVEEDPESNQTGFTPSYRTDE. Residues 816–825 are compositionally biased toward polar residues; sequence SNQTGFTPSY. Asparagine 817 is a glycosylation site (N-linked (GlcNAc...) asparagine). The chain crosses the membrane as a helical span at residues 848 to 870; sequence ILITIIAMSALGVLLGAICGVVL. The Cytoplasmic segment spans residues 871–914; it reads YCACWHNGMSERNLSALENYNFELVDGVKLKKDKLNTQNSYSEA.

It belongs to the neuropilin family. Homodimer, and heterodimer. As to expression, developing nervous system; optic tectum (layers D and E of SGFS), amacrine cells of retina, neurites of dorsal root ganglia. Also expressed in non-neuronal cells, e.g. blood vessels in the entire embryo.

It is found in the mitochondrion membrane. Its subcellular location is the cell membrane. Receptor involved in the development of the cardiovascular system, in angiogenesis, in the formation of certain neuronal circuits and in organogenesis outside the nervous system. Mediates the chemorepulsant activity of semaphorins. Binding to VEGFA initiates a signaling pathway needed for motor neuron axon guidance and cell body migration, including for the caudal migration of facial motor neurons from rhombomere 4 to rhombomere 6 during embryonic development. Regulates mitochondrial iron transport via interaction. In Gallus gallus (Chicken), this protein is Neuropilin-1 (NRP1).